The chain runs to 107 residues: Nucleoid-associated protein RF_1365 (107 aa).

This sequence belongs to the YbaB/EbfC family. As to quaternary structure, homodimer.

The protein resides in the cytoplasm. The protein localises to the nucleoid. Binds to DNA and alters its conformation. May be involved in regulation of gene expression, nucleoid organization and DNA protection. The protein is Nucleoid-associated protein RF_1365 of Rickettsia felis (strain ATCC VR-1525 / URRWXCal2) (Rickettsia azadi).